The primary structure comprises 64 residues: Translational regulator CsrA 1 (64 aa).

The protein belongs to the CsrA/RsmA family. Homodimer; the beta-strands of each monomer intercalate to form a hydrophobic core, while the alpha-helices form wings that extend away from the core.

The protein localises to the cytoplasm. In terms of biological role, a key translational regulator that binds mRNA to regulate translation initiation and/or mRNA stability. Mediates global changes in gene expression, shifting from rapid growth to stress survival by linking envelope stress, the stringent response and the catabolite repression systems. Usually binds in the 5'-UTR; binding at or near the Shine-Dalgarno sequence prevents ribosome-binding, repressing translation, binding elsewhere in the 5'-UTR can activate translation and/or stabilize the mRNA. Its function is antagonized by small RNA(s). The polypeptide is Translational regulator CsrA 1 (Pseudomonas syringae pv. tomato (strain ATCC BAA-871 / DC3000)).